The following is a 361-amino-acid chain: Mannose-1-phosphate guanyltransferase (361 aa).

It belongs to the transferase hexapeptide repeat family.

The protein resides in the cytoplasm. It carries out the reaction alpha-D-mannose 1-phosphate + GTP + H(+) = GDP-alpha-D-mannose + diphosphate. Its pathway is nucleotide-sugar biosynthesis; GDP-alpha-D-mannose biosynthesis; GDP-alpha-D-mannose from alpha-D-mannose 1-phosphate (GTP route): step 1/1. Its function is as follows. Involved in cell wall synthesis where it is required for glycosylation. Involved in cell cycle progression through cell-size checkpoint. In Kluyveromyces lactis (strain ATCC 8585 / CBS 2359 / DSM 70799 / NBRC 1267 / NRRL Y-1140 / WM37) (Yeast), this protein is Mannose-1-phosphate guanyltransferase (MPG1).